The chain runs to 122 residues: Serum amyloid A-1 protein (122 aa).

The first 18 residues, 1–18 (MKPFVAIIFCFLILGVDS), serve as a signal peptide directing secretion. The important for amyloid formation stretch occupies residues 19 to 45 (QRWFQFMKEAGQGTRDMWRAYTDMREA). The tract at residues 100-122 (ANEWGRSGKDPNFFRPPGLPSKY) is disordered.

This sequence belongs to the SAA family. As to quaternary structure, homohexamer; dimer of trimers. Can form amyloid fibrils after partial proteolysis; the native, undenatured protein does not form amyloid fibrils (in vitro). Apolipoprotein of the HDL complex. Binds to heparin. As to expression, detected in liver, spleen and kidney.

Its subcellular location is the secreted. Its function is as follows. Major acute phase protein. In Mesocricetus auratus (Golden hamster), this protein is Serum amyloid A-1 protein (SAA1).